The following is a 506-amino-acid chain: Exoglucanase (506 aa).

The first 18 residues, 1–18 (MFPRSILLALSLTAVALG), serve as a signal peptide directing secretion. The catalytic stretch occupies residues 19-450 (QQVGTNMAEN…IKFGDINSTF (432 aa)). The Nucleophile role is filled by E227. Catalysis depends on E232, which acts as the Proton donor. Residue N308 is glycosylated (N-linked (GlcNAc...) asparagine). The tract at residues 405–426 (ASPSQPGISRGTCSRDSGKPED) is disordered. A compositionally biased stretch (polar residues) spans 406–419 (SPSQPGISRGTCSR). N447 is a glycosylation site (N-linked (GlcNAc...) asparagine). Residues 449-472 (TFNNNGGGGGNPSPTTTRPNSPAQ) form a disordered region. A linker region spans residues 451–473 (NNNGGGGGNPSPTTTRPNSPAQT). Low complexity predominate over residues 460 to 470 (PSPTTTRPNSP). Residues 470–506 (PAQTMWGQCGGQGWTGPTACQSPSTCHVINDFYSQCF) enclose the CBM1 domain. 2 disulfide bridges follow: C478–C495 and C489–C505.

Belongs to the glycosyl hydrolase 7 (cellulase C) family.

It catalyses the reaction Hydrolysis of (1-&gt;4)-beta-D-glucosidic linkages in cellulose and cellotetraose, releasing cellobiose from the non-reducing ends of the chains.. Functionally, the biological conversion of cellulose to glucose generally requires three types of hydrolytic enzymes: (1) Endoglucanases which cut internal beta-1,4-glucosidic bonds; (2) Exocellobiohydrolases that cut the disaccharide cellobiose from the non-reducing end of the cellulose polymer chain; (3) Beta-1,4-glucosidases which hydrolyze the cellobiose and other short cello-oligosaccharides to glucose. The polypeptide is Exoglucanase (cel2) (Agaricus bisporus (White button mushroom)).